A 466-amino-acid polypeptide reads, in one-letter code: Cysteine--tRNA ligase (466 aa).

Position 27 (cysteine 27) interacts with Zn(2+). The 'HIGH' region motif lies at 29 to 39 (PTVYDDAHLGH). Positions 208, 238, and 242 each coordinate Zn(2+). The short motif at 270 to 274 (KMSKS) is the 'KMSKS' region element. Lysine 273 provides a ligand contact to ATP.

It belongs to the class-I aminoacyl-tRNA synthetase family. In terms of assembly, monomer. The cofactor is Zn(2+).

It localises to the cytoplasm. It catalyses the reaction tRNA(Cys) + L-cysteine + ATP = L-cysteinyl-tRNA(Cys) + AMP + diphosphate. In Sulfurimonas denitrificans (strain ATCC 33889 / DSM 1251) (Thiomicrospira denitrificans (strain ATCC 33889 / DSM 1251)), this protein is Cysteine--tRNA ligase.